The following is a 159-amino-acid chain: F1845 fimbrial protein (159 aa).

A signal peptide spans 1-21 (MKKLAIMAAASMIFTVGSAQA).

This sequence belongs to the Dr-adhesin family.

Its subcellular location is the fimbrium. In terms of biological role, hemagglutinins of uropathogenic E.coli mediate adherence to the upper urinary tract. These adhesins bind to the Dr blood group antigen and also agglutinate human erythrocytes in the presence of D-mannose (mannose-resistant hemagglutination (MRHA)). C1845 is a strain responsible for diarrheal disease. This is F1845 fimbrial protein (daaE) from Escherichia coli.